The sequence spans 568 residues: Proline--tRNA ligase (568 aa).

This sequence belongs to the class-II aminoacyl-tRNA synthetase family. ProS type 1 subfamily. Homodimer.

The protein localises to the cytoplasm. The catalysed reaction is tRNA(Pro) + L-proline + ATP = L-prolyl-tRNA(Pro) + AMP + diphosphate. Functionally, catalyzes the attachment of proline to tRNA(Pro) in a two-step reaction: proline is first activated by ATP to form Pro-AMP and then transferred to the acceptor end of tRNA(Pro). As ProRS can inadvertently accommodate and process non-cognate amino acids such as alanine and cysteine, to avoid such errors it has two additional distinct editing activities against alanine. One activity is designated as 'pretransfer' editing and involves the tRNA(Pro)-independent hydrolysis of activated Ala-AMP. The other activity is designated 'posttransfer' editing and involves deacylation of mischarged Ala-tRNA(Pro). The misacylated Cys-tRNA(Pro) is not edited by ProRS. The protein is Proline--tRNA ligase of Alkalilimnicola ehrlichii (strain ATCC BAA-1101 / DSM 17681 / MLHE-1).